The chain runs to 432 residues: Asparagine--tRNA ligase (432 aa).

The protein belongs to the class-II aminoacyl-tRNA synthetase family. In terms of assembly, homodimer.

The protein resides in the cytoplasm. It catalyses the reaction tRNA(Asn) + L-asparagine + ATP = L-asparaginyl-tRNA(Asn) + AMP + diphosphate + H(+). This chain is Asparagine--tRNA ligase, found in Lactobacillus johnsonii (strain CNCM I-12250 / La1 / NCC 533).